A 1213-amino-acid polypeptide reads, in one-letter code: Probable ATP-binding protein BrxC (1213 aa).

It belongs to the BrxC family.

In terms of biological role, BREX systems (bacteriophage exclusion) provide immunity against bacteriophage. Part of a type 1 BREX system which protects against dsDNA phage. This system allows phage adsorption but prevents phage DNA replication, without degradation of the phage DNA. Methylation of bacterial DNA by PglX guides self/non-self discrimination. When the brxA-brxB-brxC-pglX-pglZ-brxL genes are transformed into a susceptible E.coli strain (BW25113) they confer very high resistance to infection by bacteriophage VR7 and VpaE1, about 100-fold protection against lambda, T5 and T7 and no protection against RNA phage Qbeta, ssDNA phage M13 or dSDNA phage T4 and VR5. Glycosylated phage DNA is not susceptible to BREX. The BREX system does not confer resistance to lysogenic lambda phage, i.e. prophage that are integrated into the chromosomal DNA and then induced to form phage. This Escherichia coli O9:H4 (strain HS) protein is Probable ATP-binding protein BrxC.